Reading from the N-terminus, the 316-residue chain is Acetyl-coenzyme A carboxylase carboxyl transferase subunit beta (316 aa).

The region spanning 39-308 (LWHKCSKCGV…TPPMVLWETM (270 aa)) is the CoA carboxyltransferase N-terminal domain. Residues cysteine 43, cysteine 46, cysteine 62, and cysteine 65 each contribute to the Zn(2+) site. A C4-type zinc finger spans residues 43–65 (CSKCGVLTYTKDLRANQMVCVEC).

This sequence belongs to the AccD/PCCB family. In terms of assembly, acetyl-CoA carboxylase is a heterohexamer composed of biotin carboxyl carrier protein (AccB), biotin carboxylase (AccC) and two subunits each of ACCase subunit alpha (AccA) and ACCase subunit beta (AccD). Requires Zn(2+) as cofactor.

It localises to the cytoplasm. It carries out the reaction N(6)-carboxybiotinyl-L-lysyl-[protein] + acetyl-CoA = N(6)-biotinyl-L-lysyl-[protein] + malonyl-CoA. It participates in lipid metabolism; malonyl-CoA biosynthesis; malonyl-CoA from acetyl-CoA: step 1/1. Component of the acetyl coenzyme A carboxylase (ACC) complex. Biotin carboxylase (BC) catalyzes the carboxylation of biotin on its carrier protein (BCCP) and then the CO(2) group is transferred by the transcarboxylase to acetyl-CoA to form malonyl-CoA. The protein is Acetyl-coenzyme A carboxylase carboxyl transferase subunit beta of Trichormus variabilis (strain ATCC 29413 / PCC 7937) (Anabaena variabilis).